A 429-amino-acid polypeptide reads, in one-letter code: TNFAIP3-interacting protein 2 (429 aa).

Phosphoserine is present on Ser-7. Residues 29–117 are a coiled coil; the sequence is QRLRRLQDQL…MQQLLSQPQH (89 aa). Positions 177–195 are enriched in basic and acidic residues; that stretch reads HAQRNVGERSPDQSEHTDG. A disordered region spans residues 177–199; the sequence is HAQRNVGERSPDQSEHTDGHTSV. Coiled coils occupy residues 196-226 and 255-340; these read HTSV…LNAK and ELMR…QVSW. Residues 289 to 347 are ubiquitin-binding domain (UBD); it reads RDAALERVQMLEQQILAYKDDFMSERADRERAQSRIQELEEKVASLLHQVSWRQDSREP. A disordered region spans residues 372–400; sequence PGGWRPGTGSQQPEPPAEGGHPGAAQRGQ. The segment covering 388–397 has biased composition (low complexity); it reads AEGGHPGAAQ. The CCHC NOA-type zinc finger occupies 397 to 429; it reads QRGQGDLQCPHCLQCFSDEQGEELLRHVAECCQ. 4 residues coordinate Zn(2+): Cys-405, Cys-408, His-423, and Cys-427.

Interacts with STK11/LKB1, TNFAIP3, IKBKG, NFKB1, MAP3K8, TEK, RIPK1, CHUK, IKBKB and SMARCD1. Interacts with polyubiquitin. In terms of assembly, (Microbial infection) Interacts with severe fever with thrombocytopenia syndrome virus (SFTSV) NSs; this interaction promotes TPL2 complex formation and signaling activity leading to IL-10 production. Post-translationally, in vitro phosphorylated by CHUK. In terms of processing, ubiquitinated; undergoes 'Lys-48'-linked polyubiquitination probably leading to constitutive proteasomal degradation which can be impaired by IKK-A/CHUK or IKBKB probably involving deubiquitination. Deubiquitinated by USP35; leading to stabilization and inhibition of TNFalpha-induced NF-kappa-B activation. Ubiquitously expressed in all tissues examined.

The protein localises to the cytoplasm. It is found in the nucleus. Functionally, inhibits NF-kappa-B activation by blocking the interaction of RIPK1 with its downstream effector NEMO/IKBKG. Forms a ternary complex with NFKB1 and MAP3K8 but appears to function upstream of MAP3K8 in the TLR4 signaling pathway that regulates MAP3K8 activation. Involved in activation of the MEK/ERK signaling pathway during innate immune response; this function seems to be stimulus- and cell type specific. Required for stability of MAP3K8. Involved in regulation of apoptosis in endothelial cells; promotes TEK agonist-stimulated endothelial survival. May act as transcriptional coactivator when translocated to the nucleus. Enhances CHUK-mediated NF-kappa-B activation involving NF-kappa-B p50-p65 and p50-c-Rel complexes. In Homo sapiens (Human), this protein is TNFAIP3-interacting protein 2.